A 565-amino-acid chain; its full sequence is Hemagglutinin-neuraminidase (565 aa).

Residues 1 to 20 are Intravirion-facing; it reads MVAEDAPVRGTCRVLFRTTT. A helical transmembrane segment spans residues 21 to 41; sequence LIFLCTLLALSISILYESLII. Topologically, residues 42–565 are virion surface; it reads QKQIMSQAGS…VPFIRQVTLS (524 aa). N-linked (GlcNAc...) asparagine; by host glycosylation is found at asparagine 110 and asparagine 139. Disulfide bonds link cysteine 161–cysteine 185, cysteine 175–cysteine 236, and cysteine 227–cysteine 240. Positions 223–228 are involved in neuraminidase activity; it reads NRKSCS. Asparagine 267 carries an N-linked (GlcNAc...) asparagine; by host glycan. Disulfide bonds link cysteine 333–cysteine 454, cysteine 365–cysteine 375, and cysteine 448–cysteine 458. N-linked (GlcNAc...) asparagine; by host glycosylation is present at asparagine 504. Cysteine 528 and cysteine 539 are joined by a disulfide.

Belongs to the paramyxoviruses hemagglutinin-neuraminidase family. As to quaternary structure, homotetramer; composed of disulfide-linked homodimers. Interacts with F protein trimer.

Its subcellular location is the virion membrane. The protein resides in the host cell membrane. It carries out the reaction Hydrolysis of alpha-(2-&gt;3)-, alpha-(2-&gt;6)-, alpha-(2-&gt;8)- glycosidic linkages of terminal sialic acid residues in oligosaccharides, glycoproteins, glycolipids, colominic acid and synthetic substrates.. Its function is as follows. Attaches the virus to sialic acid-containing cell receptors and thereby initiating infection. Binding of HN protein to the receptor induces a conformational change that allows the F protein to trigger virion/cell membranes fusion. In terms of biological role, neuraminidase activity ensures the efficient spread of the virus by dissociating the mature virions from the neuraminic acid containing glycoproteins. The polypeptide is Hemagglutinin-neuraminidase (HN) (Parainfluenza virus 5 (isolate Canine/CPI-) (PIV5)).